Here is a 157-residue protein sequence, read N- to C-terminus: 2-C-methyl-D-erythritol 2,4-cyclodiphosphate synthase (157 aa).

A divalent metal cation is bound by residues Asp-8 and His-10. 4-CDP-2-C-methyl-D-erythritol 2-phosphate-binding positions include 8–10 and 34–35; these read DVH and HS. Residue His-42 coordinates a divalent metal cation. Residues 56–58, 61–65, 132–135, and Phe-139 each bind 4-CDP-2-C-methyl-D-erythritol 2-phosphate; these read DIG, FPDTD, and TTEE.

Belongs to the IspF family. As to quaternary structure, homotrimer. A divalent metal cation is required as a cofactor.

It carries out the reaction 4-CDP-2-C-methyl-D-erythritol 2-phosphate = 2-C-methyl-D-erythritol 2,4-cyclic diphosphate + CMP. Its pathway is isoprenoid biosynthesis; isopentenyl diphosphate biosynthesis via DXP pathway; isopentenyl diphosphate from 1-deoxy-D-xylulose 5-phosphate: step 4/6. Functionally, involved in the biosynthesis of isopentenyl diphosphate (IPP) and dimethylallyl diphosphate (DMAPP), two major building blocks of isoprenoid compounds. Catalyzes the conversion of 4-diphosphocytidyl-2-C-methyl-D-erythritol 2-phosphate (CDP-ME2P) to 2-C-methyl-D-erythritol 2,4-cyclodiphosphate (ME-CPP) with a corresponding release of cytidine 5-monophosphate (CMP). In Clostridium botulinum (strain Eklund 17B / Type B), this protein is 2-C-methyl-D-erythritol 2,4-cyclodiphosphate synthase.